A 1622-amino-acid chain; its full sequence is DNA (cytosine-5)-methyltransferase 1 (1622 aa).

Positions 1–145 (MPARTAPARV…RRSKSDSETM (145 aa)) are interaction with DNMT3A. 2 interaction with the PRC2/EED-EZH2 complex regions span residues 1–342 (MPAR…VERK) and 304–610 (TPEP…TVIN). A Phosphoserine modification is found at Ser15. The 94-residue stretch at 16-109 (PAGSLPDHVR…TQKANGCPAN (94 aa)) folds into the DMAP1-binding domain. Lys70 carries the N6,N6-dimethyllysine; by EHMT2 modification. The tract at residues 100-360 (TQKANGCPAN…IPKLNPPQCP (261 aa)) is disordered. Over residues 126–137 (PRSRPKPRGPRR) the composition is skewed to basic residues. Ser138 carries the post-translational modification Phosphoserine. Lys139 is modified (N6-methyllysine; by SETD7). Ser140 carries the post-translational modification Phosphoserine; by PKB/AKT1. An interaction with DNMT3B region spans residues 146–213 (IEASSSSVAT…TESRASRAGE (68 aa)). A phosphoserine mark is found at Ser149 and Ser151. A compositionally biased stretch (low complexity) spans 149-166 (SSSSVATRRTTRQTTITS). Thr163 carries the phosphothreonine modification. Lys169 is subject to N6-acetyllysine. A Nuclear localization signal motif is present at residues 173 to 200 (KRKPKEDSEKGNANESAAEERDQDKKRR). Basic and acidic residues-rich tracts occupy residues 176–197 (PKED…DQDK), 207–222 (RASR…ERVR), 237–269 (DDRR…THLD), and 276–300 (KDKR…KEEV). Phosphothreonine is present on Thr304. Residues 327–556 (KPEPLSIPVQ…NVNRFTEDSL (230 aa)) form a DNA replication foci-targeting sequence region. Residues Cys359 and Cys362 each contribute to the Zn(2+) site. At Lys372 the chain carries N6-acetyllysine. Ser400 is modified (phosphoserine). Residues Cys420 and His424 each coordinate Zn(2+). Phosphoserine occurs at positions 515 and 555. Residues 650–696 (NTMKRRRCGVCEVCQQPECGKCKACKDMVKFGGTGRSKQACLKRRCP) form a CXXC-type zinc finger. Residues Cys657, Cys660, Cys663, Cys668, Cys671, Cys674, Cys690, and Cys695 each contribute to the Zn(2+) site. Positions 697–758 (NLAVKEADED…TYYWKVSIDE (62 aa)) are autoinhibitory linker. Positions 702–733 (EADEDEEADDDIPELPSPKKLHQGKKKKQNKD) are disordered. Residues 703 to 714 (ADEDEEADDDIP) show a composition bias toward acidic residues. Ser718 is modified (phosphoserine). Over residues 720-731 (KKLHQGKKKKQN) the composition is skewed to basic residues. Ser736 bears the Phosphoserine mark. N6-acetyllysine is present on Lys753. Positions 759 to 884 (ETLEVGDCVS…QDYARFESPP (126 aa)) constitute a BAH 1 domain. Phosphoserine is present on Ser882. Lys895, Lys961, and Lys980 each carry N6-acetyllysine. A BAH 2 domain is found at 977-1105 (TYRKYSDYIK…SKTKSFEDPP (129 aa)). Positions 1099-1138 (KSFEDPPNHARSPGNKGKGKGKGKGKGKPQVSEPKEPEAA) are disordered. Tandem repeats lie at residues 1114-1115 (KG), 1116-1117 (KG), 1118-1119 (KG), 1120-1121 (KG), 1122-1123 (KG), and 1124-1125 (KG). The interval 1114-1127 (KGKGKGKGKGKGKP) is 7 X 2 AA tandem repeats of K-G. Basic residues predominate over residues 1115-1125 (GKGKGKGKGKG). Lys1116, Lys1118, Lys1120, Lys1122, Lys1124, and Lys1126 each carry N6-acetyllysine. A 7; approximate repeat occupies 1126–1127 (KP). The interaction with the PRC2/EED-EZH2 complex stretch occupies residues 1126–1622 (KPQVSEPKEP…KGKEETTTED (497 aa)). Residues 1144–1603 (LRTLDVFSGC…LEIKLCLLAS (460 aa)) enclose the SAM-dependent MTase C5-type domain. Positions 1144–1622 (LRTLDVFSGC…KGKEETTTED (479 aa)) are catalytic. S-adenosyl-L-methionine contacts are provided by residues Ser1151, 1155–1156 (GL), 1173–1174 (EM), 1195–1196 (DC), and Cys1196. Residue Cys1231 is part of the active site. The residue at position 1354 (Lys1354) is an N6-acetyllysine. The residue at position 1436 (Ser1436) is a Phosphoserine. Positions 1582 and 1584 each coordinate S-adenosyl-L-methionine. Lys1613 participates in a covalent cross-link: Glycyl lysine isopeptide (Lys-Gly) (interchain with G-Cter in SUMO2).

It belongs to the class I-like SAM-binding methyltransferase superfamily. C5-methyltransferase family. In terms of assembly, homodimer. Forms a stable complex with E2F1, BB1 and HDAC1. Forms a complex with DMAP1 and HDAC2, with direct interaction. Interacts with the PRC2/EED-EZH2 complex. Probably part of a corepressor complex containing ZNF304, TRIM28, SETDB1 and DNMT1. Interacts with UHRF1; promoting its recruitment to hemimethylated DNA. Interacts with USP7, promoting its deubiquitination. Interacts with PCNA. Interacts with MBD2 and MBD3. Interacts with DNMT3A and DNMT3B. Interacts with UBC9. Interacts with CSNK1D. Interacts with HDAC1. Interacts with BAZ2A/TIP5. Interacts with SIRT7. Interacts with ZNF263; recruited to the SIX3 promoter along with other proteins involved in chromatin modification and transcriptional corepression where it contributes to transcriptional repression. Interacts with L3MBTL3 and DCAF5; the interaction requires DNMT1 methylation at Lys-139 and is necessary to target DNMT1 for ubiquitination by the CRL4-DCAF5 E3 ubiquitin ligase complex and proteasomal degradation. Interacts with PHF20L1; the interaction requires DNMT1 methylation at Lys-139 and protects DNMT1 from ubiquitination and proteasomal degradation. Sumoylated; sumoylation increases activity. In terms of processing, acetylation on multiple lysines, mainly by KAT2B/PCAF, regulates cell cycle G(2)/M transition. Deacetylation of Lys-1116 and Lys-1354 by SIRT1 increases methyltransferase activity. Post-translationally, phosphorylation of Ser-151 by CDKs is important for enzymatic activity and protein stability. Phosphorylation of Ser-140 by AKT1 prevents methylation by SETD7 thereby increasing DNMT1 stability. Methylation at Lys-139 by SETD7 is necessary for the regulation of DNMT1 proteasomal degradation. In terms of processing, ubiquitinated by UHRF1; interaction with USP7 counteracts ubiquitination by UHRF1 by promoting deubiquitination and preventing degradation by the proteasome. Isoforms 0 and 8 are highly expressed in placenta, brain, lung, spleen, kidney, heart, and at much lower levels in liver. Isoform 1 is expressed in cerebellum, isoform 2 in muscle and testis, isoform 3 in lung, isoform 4 in spleen and brain, and isoform 5 in brain.

The protein localises to the nucleus. The catalysed reaction is a 2'-deoxycytidine in DNA + S-adenosyl-L-methionine = a 5-methyl-2'-deoxycytidine in DNA + S-adenosyl-L-homocysteine + H(+). Functionally, methylates CpG residues. Preferentially methylates hemimethylated DNA. Associates with DNA replication sites in S phase maintaining the methylation pattern in the newly synthesized strand, that is essential for epigenetic inheritance. Associates with chromatin during G2 and M phases to maintain DNA methylation independently of replication. It is responsible for maintaining methylation patterns established in development. DNA methylation is coordinated with methylation of histones. Mediates transcriptional repression by direct binding to HDAC2. In association with DNMT3B and via the recruitment of CTCFL/BORIS, involved in activation of BAG1 gene expression by modulating dimethylation of promoter histone H3 at H3K4 and H3K9. Probably forms a corepressor complex required for activated KRAS-mediated promoter hypermethylation and transcriptional silencing of tumor suppressor genes (TSGs) or other tumor-related genes in colorectal cancer (CRC) cells. Also required to maintain a transcriptionally repressive state of genes in undifferentiated embryonic stem cells (ESCs). Associates at promoter regions of tumor suppressor genes (TSGs) leading to their gene silencing. Promotes tumor growth. The polypeptide is DNA (cytosine-5)-methyltransferase 1 (Dnmt1) (Rattus norvegicus (Rat)).